The chain runs to 534 residues: CTP synthase (534 aa).

Residues 1–266 (MKTKFIFVTG…DEQVVEKLNI (266 aa)) are amidoligase domain. Ser14 is a CTP binding site. Ser14 lines the UTP pocket. ATP contacts are provided by residues 15–20 (SIGKGL) and Asp72. Positions 72 and 140 each coordinate Mg(2+). Residues 147–149 (DIE), 187–192 (KTKPTQ), and Lys223 contribute to the CTP site. Residues 187 to 192 (KTKPTQ) and Lys223 each bind UTP. Residues 292–534 (RIAIVGKYVN…IAAALHNIKA (243 aa)) form the Glutamine amidotransferase type-1 domain. Gly354 is an L-glutamine binding site. The active-site Nucleophile; for glutamine hydrolysis is Cys381. Residues 382–385 (LGMQ), Glu405, and Arg462 each bind L-glutamine. Catalysis depends on residues His507 and Glu509.

The protein belongs to the CTP synthase family. In terms of assembly, homotetramer.

The catalysed reaction is UTP + L-glutamine + ATP + H2O = CTP + L-glutamate + ADP + phosphate + 2 H(+). It catalyses the reaction L-glutamine + H2O = L-glutamate + NH4(+). The enzyme catalyses UTP + NH4(+) + ATP = CTP + ADP + phosphate + 2 H(+). The protein operates within pyrimidine metabolism; CTP biosynthesis via de novo pathway; CTP from UDP: step 2/2. Allosterically activated by GTP, when glutamine is the substrate; GTP has no effect on the reaction when ammonia is the substrate. The allosteric effector GTP functions by stabilizing the protein conformation that binds the tetrahedral intermediate(s) formed during glutamine hydrolysis. Inhibited by the product CTP, via allosteric rather than competitive inhibition. Catalyzes the ATP-dependent amination of UTP to CTP with either L-glutamine or ammonia as the source of nitrogen. Regulates intracellular CTP levels through interactions with the four ribonucleotide triphosphates. The chain is CTP synthase from Geotalea uraniireducens (strain Rf4) (Geobacter uraniireducens).